Reading from the N-terminus, the 300-residue chain is Putative hydrolase ML2424 (300 aa).

Aspartate 56 (nucleophile) is an active-site residue. Aspartate 56, aspartate 58, and aspartate 231 together coordinate Mg(2+). Aspartate 58 functions as the Proton donor in the catalytic mechanism.

This sequence belongs to the HAD-like hydrolase superfamily. SerB family. The cofactor is Mg(2+).

This chain is Putative hydrolase ML2424, found in Mycobacterium leprae (strain TN).